The sequence spans 272 residues: MVPTIIYSAILALSAFTPSVFAQTRSSGCGKQPSLANGVHNINGREYILKVPDNYDKNKAHHLVFGLHWRGGNMWNIVDGQSIQPWYGLETRAQGSAIFVAPNGKNAGWANYGGEDIAFIDAIIKQVESDLCVDQSSRFATGFSWGGGMSYSLACSRAKQFKAVSVLSGGVISGCDGGNDPIAYLGIHGINDGVLPFQGGVNLAQKFVRNNGCQQSNVGTPQPGSRGSVRTDFKGCSKPVSFIAYDGGHDAAPLGVGSSLAPDATWRFFMAA.

The signal sequence occupies residues 1 to 22 (MVPTIIYSAILALSAFTPSVFA).

It belongs to the faeC family.

It is found in the secreted. It catalyses the reaction feruloyl-polysaccharide + H2O = ferulate + polysaccharide.. In terms of biological role, involved in degradation of plant cell walls. Hydrolyzes the feruloyl-arabinose ester bond in arabinoxylans, and the feruloyl-galactose ester bond in pectin. Active against paranitrophenyl-acetate, methyl ferulate and wheat arabinoxylan. The polypeptide is Probable feruloyl esterase C (faeC) (Aspergillus fumigatus (strain ATCC MYA-4609 / CBS 101355 / FGSC A1100 / Af293) (Neosartorya fumigata)).